The following is a 227-amino-acid chain: tRNA (guanine-N(1)-)-methyltransferase (227 aa).

S-adenosyl-L-methionine-binding positions include glycine 110 and isoleucine 129–leucine 134.

It belongs to the RNA methyltransferase TrmD family. Homodimer.

The protein localises to the cytoplasm. It carries out the reaction guanosine(37) in tRNA + S-adenosyl-L-methionine = N(1)-methylguanosine(37) in tRNA + S-adenosyl-L-homocysteine + H(+). Its function is as follows. Specifically methylates guanosine-37 in various tRNAs. The protein is tRNA (guanine-N(1)-)-methyltransferase of Mycoplasmopsis agalactiae (strain NCTC 10123 / CIP 59.7 / PG2) (Mycoplasma agalactiae).